The sequence spans 1156 residues: ATP-dependent RNA helicase glh-4 (1156 aa).

4 disordered regions span residues 1–81 (MSFS…GAPS), 194–213 (TGVGASEVPTSKPSSFGQQP), 231–423 (SSSG…DSST), and 436–522 (HRAS…SGLG). Positions 12–22 (AEVKVAEDVPE) are enriched in basic and acidic residues. Residues 24–34 (NVPPPVEPPRA) are compositionally biased toward pro residues. Polar residues-rich tracts occupy residues 60 to 73 (ITTSKTFGSQTTPK), 194 to 211 (TGVGASEVPTSKPSSFGQ), and 243 to 258 (TESSGFPTKETSTSQP). The span at 259-281 (GFGGDSSTGFGSGLKAGFGGHGA) shows a compositional bias: gly residues. The span at 307–319 (ASSSNESAFGQQS) shows a compositional bias: polar residues. Gly residues-rich tracts occupy residues 321-332 (GFGGATKNGFGG) and 342-358 (SKAGFGGTSSSGIGGQK). Polar residues-rich tracts occupy residues 362–371 (TESSGFPTKE) and 395–406 (PSTTDSSSGQQT). Residues 408-423 (GFGGASKPGFGGDSST) are compositionally biased toward gly residues. 2 stretches are compositionally biased toward polar residues: residues 440 to 451 (TAENSGLPTETT) and 464 to 476 (ASSSNESAFGQQS). The span at 478-489 (GFGGATKNGFGG) shows a compositional bias: gly residues. 5 consecutive CCHC-type zinc fingers follow at residues 570 to 587 (RGCHNCGEEGHISKECDK), 593 to 610 (FPCRNCEQLGHFASDCDQ), 616 to 633 (GPCRNCGIEGHFAVDCDQ), 639 to 656 (GPCRNCGQEGHFAKDCQN), and 665 to 682 (EPCRRCAEEGHWGYECPT). The Q motif motif lies at 736–764 (SFDGFKILPQDLHDNLKRMKMNRPTPIQR). In terms of domain architecture, Helicase ATP-binding spans 767-951 (FFPIMHGNDV…LPKFVKEGYT (185 aa)). An ATP-binding site is contributed by 780-787 (AHTGSGKT). The DEAD box signature appears at 897–900 (DEAD). In terms of domain architecture, Helicase C-terminal spans 986-1139 (GIDENTVTLL…EVPEWLTEGA (154 aa)). The disordered stretch occupies residues 1135–1156 (LTEGAGHQEEGGDDWNEQEQEW). Over residues 1145 to 1156 (GGDDWNEQEQEW) the composition is skewed to acidic residues.

Belongs to the DEAD box helicase family. DDX4/VASA subfamily. In terms of assembly, interacts (via C-terminus) with kgb-1.

It catalyses the reaction ATP + H2O = ADP + phosphate + H(+). Its function is as follows. Probable ATP-binding RNA helicase. May act redundantly with the P-granule component glh-1 to regulate the formation of the granular structure of P-granules in embryos. May protect somatic cells from excessive apoptosis during normal development. This is ATP-dependent RNA helicase glh-4 from Caenorhabditis elegans.